Reading from the N-terminus, the 665-residue chain is GTPase IMAP family member 8 (665 aa).

Positions 8–210 constitute an AIG1-type G 1 domain; sequence MSELRLLLLG…HVNFKTEGSR (203 aa). The tract at residues 17–24 is G1; it reads GKCRSGKS. Residues 17–25 and serine 38 contribute to the GTP site; that span reads GKCRSGKSA. The tract at residues 44 to 48 is G2; sequence TVIKM. Positions 65-68 are G3; it reads DTPD. Positions 134 to 137 are G4; that stretch reads TRKD. Residues 135–137 and asparagine 170 contribute to the GTP site; that span reads RKD. Positions 169–171 are G5; that stretch reads NNK. Residues 217–246 form a disordered region; it reads EAASQEGDKPQGPRERQLQSTGPEQNPGTS. Over residues 222–233 the composition is skewed to basic and acidic residues; it reads EGDKPQGPRERQ. The segment covering 234–246 has biased composition (polar residues); sequence LQSTGPEQNPGTS. AIG1-type G domains follow at residues 245–435 and 436–644; these read TSEL…VFRE and KETL…SKLI. Coiled coils occupy residues 400 to 427 and 608 to 657; these read NYRA…HQNG and QAQE…EKLL.

The protein belongs to the TRAFAC class TrmE-Era-EngA-EngB-Septin-like GTPase superfamily. AIG1/Toc34/Toc159-like paraseptin GTPase family. IAN subfamily. As to expression, expressed in the spleen, intestine, liver, and colon, as well as in lung, placenta, kidney, muscle, and heart. Extremely low expression, if any, in brain, in thymus, bone marrow, and blood leukocytes. Detected in T-cells.

It localises to the endoplasmic reticulum. Its subcellular location is the golgi apparatus. The protein resides in the mitochondrion. It is found in the cytoplasm. The protein localises to the cytosol. Its function is as follows. Exerts an anti-apoptotic effect in the immune system and is involved in responses to infections. This is GTPase IMAP family member 8 (GIMAP8) from Homo sapiens (Human).